The primary structure comprises 361 residues: Alternative oxidase, mitochondrial (361 aa).

A helical membrane pass occupies residues 155-175; it reads LIRYVFLESVAGVPGMVAGML. Positions 162, 201, and 204 each coordinate Fe cation. A helical transmembrane segment spans residues 221–241; sequence MILGAQGVFFNSFFLCYLFSP. Fe cation-binding residues include Glu-252, Glu-253, Glu-309, and His-312. Residues 320-361 form a disordered region; it reads GNLKQDEDPNPFVSEYGKERGEKPGKGIESLKPVGWERDEVI. The segment covering 335 to 345 has biased composition (basic and acidic residues); it reads YGKERGEKPGK.

Belongs to the alternative oxidase family. The cofactor is Fe cation.

It localises to the mitochondrion inner membrane. Catalyzes cyanide-resistant oxygen consumption. May increase respiration when the cytochrome respiratory pathway is restricted, or in response to low temperatures. In Botryotinia fuckeliana (Noble rot fungus), this protein is Alternative oxidase, mitochondrial (aox).